Here is a 473-residue protein sequence, read N- to C-terminus: Gamma-aminobutyric acid receptor subunit beta-3 (473 aa).

The signal sequence occupies residues 1 to 25 (MWGLAGGRLFGIFSAPVLVAVVCCA). Over 26–246 (QSVNDPGNMS…FRLKRNIGYF (221 aa)) the chain is Extracellular. 2 N-linked (GlcNAc...) asparagine glycosylation sites follow: N33 and N105. 120–122 (DTY) provides a ligand contact to benzamidine. 4-aminobutanoate is bound at residue Y122. Residue Y122 participates in histamine binding. The cysteines at positions 161 and 175 are disulfide-linked. N-linked (GlcNAc...) asparagine glycosylation is present at N174. Residues E180 and Y182 each contribute to the 4-aminobutanoate site. Residues 180–182 (ESY) and F225 contribute to the benzamidine site. Residue 181 to 182 (SY) participates in histamine binding. T227 provides a ligand contact to 4-aminobutanoate. T227 is a histamine binding site. Residues 247–267 (ILQTYMPSILITILSWVSFWI) form a helical membrane-spanning segment. Residues 268-271 (NYDA) lie on the Cytoplasmic side of the membrane. The chain crosses the membrane as a helical span at residues 272–292 (SAARVALGITTVLTMTTINTH). Over 293-304 (LRETLPKIPYVK) the chain is Extracellular. The chain crosses the membrane as a helical span at residues 305 to 328 (AIDMYLMGCFVFVFLALLEYAFVN). At 329 to 447 (YIFFGRGPQR…KIPDLTDVNA (119 aa)) the chain is on the cytoplasmic side. A helical transmembrane segment spans residues 448-470 (IDRWSRIVFPFTFSLFNLVYWLY). The Extracellular segment spans residues 471–473 (YVN).

It belongs to the ligand-gated ion channel (TC 1.A.9) family. Gamma-aminobutyric acid receptor (TC 1.A.9.5) subfamily. GABRB3 sub-subfamily. As to quaternary structure, heteropentamer, formed by a combination of alpha (GABRA1-6), beta (GABRB1-3), gamma (GABRG1-3), delta (GABRD), epsilon (GABRE), rho (GABRR1-3), pi (GABRP) and theta (GABRQ) chains, each subunit exhibiting distinct physiological and pharmacological properties. Can form functional homopentamers (in vitro). Interacts with UBQLN1. May interact with KIF21B. Identified in a complex of 720 kDa composed of LHFPL4, NLGN2, GABRA1, GABRB2, GABRG2 and GABRB3. Interacts with LHFPL4. Interacts with GIT1; this interaction is required for synaptic GABRB3 surface stability and inhibitory synapse strength.

It localises to the postsynaptic cell membrane. The protein resides in the cell membrane. Its subcellular location is the cytoplasmic vesicle membrane. It carries out the reaction chloride(in) = chloride(out). Potentiated by histamine. Functionally, beta subunit of the heteropentameric ligand-gated chloride channel gated by gamma-aminobutyric acid (GABA), a major inhibitory neurotransmitter in the brain. GABA-gated chloride channels, also named GABA(A) receptors (GABAAR), consist of five subunits arranged around a central pore and contain GABA active binding site(s) located at the alpha and beta subunit interface(s). GABAARs containing beta-3/GABRB3 subunit are found at both synaptic and extrasynaptic sites. When activated by GABA, GABAARs selectively allow the flow of chloride anions across the cell membrane down their electrochemical gradient. Chloride influx into the postsynaptic neuron following GABAAR opening decreases the neuron ability to generate a new action potential, thereby reducing nerve transmission. GABAARs containing alpha-1 and beta-3 subunits exhibit synaptogenic activity; the gamma-2 subunit being necessary but not sufficient to induce rapid synaptic contacts formation. Extrasynaptic beta-3 receptors contribute to the tonic GABAergic inhibition. GABAARs containing alpha-1, beta-3 and epsilon subunits may also permit spontaneous chloride channel activity while preserving the structural information required for GABA-gated openings. Beta-containing GABAARs can simultaneously bind GABA and histamine where histamine binds at the interface of two neighboring beta subunits, which may be involved in the regulation of sleep and wakefulness. Plays an important role in somatosensation and in the production of antinociception. The chain is Gamma-aminobutyric acid receptor subunit beta-3 from Homo sapiens (Human).